A 103-amino-acid polypeptide reads, in one-letter code: Histone H4 (103 aa).

Residues 1-14 (MTGRGKGGKGLGKG) are compositionally biased toward gly residues. Residues 1–20 (MTGRGKGGKGLGKGGAKRHR) form a disordered region. Residues Lys6 and Lys13 each carry the N6-acetyl-N6-methyllysine; alternate modification. Residues 17–21 (KRHRK) mediate DNA binding.

The protein belongs to the histone H4 family. The nucleosome is a histone octamer containing two molecules each of H2A, H2B, H3 and H4 assembled in one H3-H4 heterotetramer and two H2A-H2B heterodimers. The octamer wraps approximately 147 bp of DNA.

The protein localises to the nucleus. The protein resides in the chromosome. Core component of nucleosome. Nucleosomes wrap and compact DNA into chromatin, limiting DNA accessibility to the cellular machineries which require DNA as a template. Histones thereby play a central role in transcription regulation, DNA repair, DNA replication and chromosomal stability. DNA accessibility is regulated via a complex set of post-translational modifications of histones, also called histone code, and nucleosome remodeling. This Myrmica ruginodis (Red ant) protein is Histone H4 (His4).